The sequence spans 506 residues: Cysteine protease 1 (506 aa).

The tract at residues 1–21 is disordered; sequence MTSSRPSGRDSTGWQETVSNT. The active-site Nucleophile is the Cys-226. Residues Asp-399 and His-401 contribute to the active site.

The protein belongs to the peptidase C54 family.

The protein localises to the cytoplasm. It is found in the nucleus. The protein resides in the preautophagosomal structure. The catalysed reaction is [protein]-C-terminal L-amino acid-glycyl-phosphatidylethanolamide + H2O = [protein]-C-terminal L-amino acid-glycine + a 1,2-diacyl-sn-glycero-3-phosphoethanolamine. Its function is as follows. Cysteine protease that plays a key role in cytoplasm to vacuole transport (Cvt) and autophagy by mediating both proteolytic activation and delipidation of ATG8. Required for selective autophagic degradation of the nucleus (nucleophagy) as well as for mitophagy which contributes to regulate mitochondrial quantity and quality by eliminating the mitochondria to a basal level to fulfill cellular energy requirements and preventing excess ROS production. The protease activity is required for proteolytic activation of ATG8: cleaves the C-terminal amino acid of ATG8 to reveal a C-terminal glycine. ATG8 ubiquitin-like activity requires the exposure of the glycine at the C-terminus for its conjugation to phosphatidylethanolamine (PE) and its insertion to membranes, which is necessary for autophagy. The ATG8-PE conjugate mediates tethering between adjacent membranes and stimulates membrane hemifusion, leading to expansion of the autophagosomal membrane during autophagy. In addition to the protease activity, also catalyzes deconjugation of PE-conjugated forms of ATG8 during macroautophagy: ATG8 delipidation is required to release the protein from membranes, which facilitates multiple events during macroautophagy, and especially for efficient autophagosome biogenesis, the assembly of ATG9-containing tubulovesicular clusters into phagophores/autophagosomes, and for the disassembly of PAS-associated ATG components. ATG8 delipidation by ATG4 also recycles ATG8-PE generated on inappropriate membranes to maintain a reservoir of unlipidated ATG8 that is required for autophagosome formation at the PAS. This Neurospora crassa (strain ATCC 24698 / 74-OR23-1A / CBS 708.71 / DSM 1257 / FGSC 987) protein is Cysteine protease 1 (cpr-1).